A 520-amino-acid chain; its full sequence is Phospholipase C A (520 aa).

The segment at residues 1 to 38 (MSASPLLGMSRREFLTKLTGAGAAAFLMDWAAPVIEKA) is a signal peptide (tat-type signal).

The protein belongs to the bacterial phospholipase C family. Post-translationally, predicted to be exported by the Tat system. The position of the signal peptide cleavage has not been experimentally proven.

It localises to the secreted. Its subcellular location is the cell wall. The catalysed reaction is a 1,2-diacyl-sn-glycero-3-phosphocholine + H2O = phosphocholine + a 1,2-diacyl-sn-glycerol + H(+). Involved in virulence. Induces cytotoxic effects on mouse macrophage cell lines, via direct or indirect enzymatic hydrolysis of cell membrane phospholipids. Hydrolyzes phosphatidylcholine. The chain is Phospholipase C A from Mycobacterium tuberculosis (strain CDC 1551 / Oshkosh).